Here is a 136-residue protein sequence, read N- to C-terminus: Neuropeptide CCHamide-2 (136 aa).

A signal peptide spans 1 to 24 (MKSTISLLLVVICTVVLAAQQSQA). The cysteines at positions 28 and 35 are disulfide-linked. His-39 bears the Histidine amide mark. Residues 42-78 (RSLSPGSGSGTGVGGGMGEAASGGQEPDYVRPNGLLP) form a disordered region. Positions 43–136 (SLSPGSGSGT…ANSAELNGVN (94 aa)) are excised as a propeptide. Residues 48 to 59 (SGSGTGVGGGMG) are compositionally biased toward gly residues.

As to expression, expressed in endocrine cells of the larval midgut (at protein level). Also expressed in endocrine cells of the midgut of adult males and females (at protein level). In the midgut, expression occurs mainly in the anterior region (at protein level). In the larval central nervous system, expressed in about 40 neurons in the brain hemispheres and ventral nerve cord (at protein level). Highly expressed in larval and adult gut with low levels in larval and adult brain. Very little expression in the larval fat body. However, another study shows high levels of expression in the larval fat body as well as the larval gut with low levels in the larval central nervous system.

The protein localises to the secreted. In terms of biological role, ligand for the CCHamide-2 receptor CCHa2-R. In one study, shown to be an orexigenic peptide which induces appetite and stimulates food intake, leading to the release of insulin-like peptides which stimulate growth. In another study, shown to be a nutrient-sensitive peptide derived from peripheral tissues which controls growth by directly regulating the production and release of insulin-like peptides. The chain is Neuropeptide CCHamide-2 from Drosophila melanogaster (Fruit fly).